Consider the following 654-residue polypeptide: MSGSQSSGSPGSPGPPGPPGRSALVVYGSETGNAQDVAEEVGALAERLHFTTQISELNHVKPESLRSYTIVVFAVSTTGQGDLPANARTFWRSLLLKKLPPTFLSGVRFTWFGLGDSSYPKFNWAARKLYKRLLQLGADEIYPGGEADHQHSSGLEGTFIPWLAGFRKHLLDKYPLPPGQDPIPDDVQLPPKWVLRLRDQEAASEDVSPPDAMGAAVTGDFPDSYRLDNDHRPLHDSLTATLVQNKRVTPQTHWQDVRHLILTVSDPISYAPGDVLTITPKNTAEDVQSLIEMMGWQEQADQLVSLVPRDSTRSTNELPSPPIHSLDSYPRLTLRELLINYLDIRAIPRRSFFAAIAHYTTYEMHKERLLEFTNPEYLDEFWDYTTRPRRSILEILHEFDTVKIPWQHATSTFPIIRARQFSIASGGELKRTSVGGARFELLIAIVKYRTVIKKIREGVCTKYISNLRPGSTLKIQLQRGGLNSSVGQLVGPTMLIGPGTGVAPLRSMLWEKAAIVKSYQEKNPGVDPPIEPTILVYGGRNRAADFFFEDEWQQLSDLIKLKVLTAFSRDQKQKVYVQDVIRENSSLVFNLLHDKGGAVFVCGSSGRMPQAVRETLTEAFQYGNDAGTQPFSRREAEDYLVGMEKTGRYKQETW.

Over residues 1 to 10 (MSGSQSSGSP) the composition is skewed to low complexity. The interval 1-22 (MSGSQSSGSPGSPGPPGPPGRS) is disordered. One can recognise a Flavodoxin-like domain in the interval 23 to 167 (ALVVYGSETG…TFIPWLAGFR (145 aa)). FMN contacts are provided by residues 29–34 (SETGNA), 76–79 (STTG), and 114–123 (LGDSSYPKFN). An FAD-binding FR-type domain is found at 235–485 (HDSLTATLVQ…QLQRGGLNSS (251 aa)). FAD contacts are provided by residues arginine 389, 419-422 (RQFS), and 458-461 (GVCT). Residues threonine 500, 568 to 569 (SR), and 574 to 578 (KVYVQ) each bind NADP(+). Tryptophan 654 is a binding site for FAD.

It belongs to the NADPH-dependent diflavin oxidoreductase NDOR1 family. This sequence in the N-terminal section; belongs to the flavodoxin family. In the C-terminal section; belongs to the flavoprotein pyridine nucleotide cytochrome reductase family. In terms of assembly, interacts with dre2; as part of the cytosolic iron-sulfur (Fe-S) protein assembly (CIA) machinery. FAD serves as cofactor. It depends on FMN as a cofactor.

The protein resides in the cytoplasm. It localises to the mitochondrion. It carries out the reaction 2 oxidized [2Fe-2S]-[protein] + NADPH = 2 reduced [2Fe-2S]-[protein] + NADP(+) + H(+). In terms of biological role, NADPH-dependent reductase which is a central component of the cytosolic iron-sulfur (Fe-S) protein assembly (CIA) machinery. Transfers electrons from NADPH via its FAD and FMN prosthetic groups to the [2Fe-2S] cluster of dre2, another key component of the CIA machinery. In turn, this reduced cluster provides electrons for assembly of cytosolic iron-sulfur cluster proteins. Positively controls H(2)O(2)-induced cell death. The chain is NADPH-dependent diflavin oxidoreductase 1 from Emericella nidulans (strain FGSC A4 / ATCC 38163 / CBS 112.46 / NRRL 194 / M139) (Aspergillus nidulans).